The sequence spans 168 residues: Large ribosomal subunit protein uL10 (168 aa).

Belongs to the universal ribosomal protein uL10 family. Part of the ribosomal stalk of the 50S ribosomal subunit. The N-terminus interacts with L11 and the large rRNA to form the base of the stalk. The C-terminus forms an elongated spine to which L12 dimers bind in a sequential fashion forming a multimeric L10(L12)X complex.

Its function is as follows. Forms part of the ribosomal stalk, playing a central role in the interaction of the ribosome with GTP-bound translation factors. The sequence is that of Large ribosomal subunit protein uL10 (rplJ) from Mycoplasmopsis pulmonis (strain UAB CTIP) (Mycoplasma pulmonis).